Consider the following 432-residue polypeptide: MKFTLVATVLLTFSLSAFAVEYPVLTTASPDQVGFDSQKLHRLDGWIQNQIDAGYPSINLLVIKDNHIVLQKAWGYAKKYDGSTLLAHPIRATTNTMYDLASNTKMYATNFALQKLVYEGKIDVNDLVSKYIPGFKDMPGDKIKGKDKLRIIDILHHVAGFPADPQYPNKNVAGKLFSQSKSTTLEMIKKTPLEYQPGSKHIYSDVDYMILGFIIESITAMPLDRYVETTIYKPLGLKHTVFNPLMKGFTPPQIAATELHGNTRDGVIHFPNIRTNTLWGQVHDEKAWYSMGGVSGHAGLFSDTHDMAVLMQVMLNGGGYGNVKLFDDKTVAQFTRRSPEDATFGLGWRVNGNASMTPTFGVLASPQTYGHTGWTGTLTSIDPVNHMAIVILGNRPHSPVANPKVNPNVFVSGLLPAATYGWIVDQIYGSLK.

A helical; Signal-anchor transmembrane segment spans residues 7-25; the sequence is ATVLLTFSLSAFAVEYPVL.

It belongs to the peptidase S12 family. YfeW subfamily.

It localises to the cell inner membrane. It catalyses the reaction Preferential cleavage: (Ac)2-L-Lys-D-Ala-|-D-Ala. Also transpeptidation of peptidyl-alanyl moieties that are N-acyl substituents of D-alanine.. The protein is Putative D-alanyl-D-alanine carboxypeptidase of Salmonella choleraesuis (strain SC-B67).